The chain runs to 195 residues: ATP-dependent Clp protease proteolytic subunit (195 aa).

The Nucleophile role is filled by serine 98. Histidine 123 is a catalytic residue.

This sequence belongs to the peptidase S14 family. In terms of assembly, fourteen ClpP subunits assemble into 2 heptameric rings which stack back to back to give a disk-like structure with a central cavity, resembling the structure of eukaryotic proteasomes.

Its subcellular location is the cytoplasm. It carries out the reaction Hydrolysis of proteins to small peptides in the presence of ATP and magnesium. alpha-casein is the usual test substrate. In the absence of ATP, only oligopeptides shorter than five residues are hydrolyzed (such as succinyl-Leu-Tyr-|-NHMec, and Leu-Tyr-Leu-|-Tyr-Trp, in which cleavage of the -Tyr-|-Leu- and -Tyr-|-Trp bonds also occurs).. Cleaves peptides in various proteins in a process that requires ATP hydrolysis. Has a chymotrypsin-like activity. Plays a major role in the degradation of misfolded proteins. This Helicobacter pylori (strain Shi470) protein is ATP-dependent Clp protease proteolytic subunit.